Here is a 202-residue protein sequence, read N- to C-terminus: Xanthine phosphoribosyltransferase (202 aa).

Xanthine is bound by residues leucine 20 and asparagine 27. 128–132 lines the 5-phospho-alpha-D-ribose 1-diphosphate pocket; it reads ASGGT. Position 156 (lysine 156) interacts with xanthine.

Belongs to the purine/pyrimidine phosphoribosyltransferase family. Xpt subfamily. Homodimer.

It localises to the cytoplasm. The catalysed reaction is XMP + diphosphate = xanthine + 5-phospho-alpha-D-ribose 1-diphosphate. The protein operates within purine metabolism; XMP biosynthesis via salvage pathway; XMP from xanthine: step 1/1. In terms of biological role, converts the preformed base xanthine, a product of nucleic acid breakdown, to xanthosine 5'-monophosphate (XMP), so it can be reused for RNA or DNA synthesis. In Deinococcus geothermalis (strain DSM 11300 / CIP 105573 / AG-3a), this protein is Xanthine phosphoribosyltransferase.